Reading from the N-terminus, the 1060-residue chain is DNA-directed RNA polymerase subunit beta (1060 aa).

This sequence belongs to the RNA polymerase beta chain family. In plastids the minimal PEP RNA polymerase catalytic core is composed of four subunits: alpha, beta, beta', and beta''. When a (nuclear-encoded) sigma factor is associated with the core the holoenzyme is formed, which can initiate transcription.

It localises to the plastid. It is found in the chloroplast. It carries out the reaction RNA(n) + a ribonucleoside 5'-triphosphate = RNA(n+1) + diphosphate. Its function is as follows. DNA-dependent RNA polymerase catalyzes the transcription of DNA into RNA using the four ribonucleoside triphosphates as substrates. The sequence is that of DNA-directed RNA polymerase subunit beta from Lactuca sativa (Garden lettuce).